Consider the following 1214-residue polypeptide: Formin-D (1214 aa).

The region spanning 10 to 379 (KKEESPQSID…KMNNGESYLD (370 aa)) is the GBD/FH3 domain. Positions 401–448 (SGEKAVLIQKEIEDLKKQKKRDQDKLAEKDKLLTKLAKRMRKMEEAIK) form a coiled coil. One can recognise an FH1 domain in the interval 457 to 544 (NNQIEIESPP…GSGDGIPLPP (88 aa)). Composition is skewed to polar residues over residues 462–479 (IESPPDSSTSTPQETTPG) and 518–534 (LDTTNQQGSTDASQTEA). 6 disordered regions span residues 462-490 (IESPPDSSTSTPQETTPGGTKVPLKTSPV), 507-569 (APNG…SRPP), 868-948 (PKSV…PLKD), 1026-1045 (DKSTQRKNEKERKEMEIKKS), 1054-1089 (LKKIGSPSSSNRILASNESSPTSSTSSVVHQHDDED), and 1133-1214 (MNLQ…EGEN). A compositionally biased stretch (pro residues) spans 541–554 (PLPPGAPPPPPPPG). One can recognise an FH2 domain in the interval 562 to 1037 (PQLCSRPPSI…STQRKNEKER (476 aa)). The span at 868-877 (PKSVEPKPDD) shows a compositional bias: basic and acidic residues. Residues 930 to 940 (QVNTNSTSDSK) show a composition bias toward polar residues. Residues 1019 to 1056 (EIEKSIKDKSTQRKNEKERKEMEIKKSKLEMIHSKLKK) adopt a coiled-coil conformation. Polar residues predominate over residues 1059–1071 (SPSSSNRILASNE). One can recognise a DAD domain in the interval 1065 to 1095 (RILASNESSPTSSTSSVVHQHDDEDEETIKE). The span at 1161-1171 (SSTYSSISSIY) shows a compositional bias: low complexity. Residues 1174–1214 (EPLDMSDQEDEDEEEEEDEEEEEEEEEGDDDNDNDEEEGEN) show a composition bias toward acidic residues. The stretch at 1176–1207 (LDMSDQEDEDEEEEEDEEEEEEEEEGDDDNDN) forms a coiled coil.

Belongs to the formin homology family. Diaphanous subfamily. Interacts (via GBD/FH3 domain) with activated Rho-GTPases.

Formins play an important role in the nucleation of actin and the formation of linear actin filaments. In Dictyostelium discoideum (Social amoeba), this protein is Formin-D (forD).